The sequence spans 165 residues: ADP-ribosylation factor-like protein 3 (165 aa).

G2 carries N-myristoyl glycine lipidation. S5 is subject to Phosphoserine. Residues 24 to 31 (GLDNAGKT), 67 to 71 (DIGGQ), and 109 to 112 (NKQD) contribute to the GTP site.

The protein belongs to the small GTPase superfamily. Arf family. Found in a complex with ARL3, RP2 and UNC119 (or UNC119B); RP2 induces hydrolysis of GTP ARL3 in the complex, leading to the release of UNC119 (or UNC119B). Interacts with RP2; interaction is direct and stimulated with the activated GTP-bound form of ARL3. Interacts with SYS1. Interacts with ARL2BP; the GTP-bound form interacts with ARL2BP. Microtubule-associated protein. Does not interact with TBCC. Interacts with RP2. Interacts with PDE6D; the interaction occurs specifically with the GTP-bound form of ARL3. Interacts with GGA1; the interaction recruits PKD1:PKD2 complex to trans-Golgi network and is required for ciliary targeting of PKD1:PKD2 complex. Interacts with DNAAF9.

It localises to the golgi apparatus membrane. The protein localises to the cytoplasm. Its subcellular location is the cytoskeleton. It is found in the spindle. The protein resides in the nucleus. It localises to the microtubule organizing center. The protein localises to the centrosome. Its subcellular location is the cell projection. It is found in the cilium. Its function is as follows. Small GTP-binding protein which cycles between an inactive GDP-bound and an active GTP-bound form, and the rate of cycling is regulated by guanine nucleotide exchange factors (GEF) and GTPase-activating proteins (GAP). Required for normal cytokinesis and cilia signaling. Requires assistance from GTPase-activating proteins (GAPs) like RP2 and PDE6D, in order to cycle between inactive GDP-bound and active GTP-bound forms. Required for targeting proteins to the cilium, including myristoylated NPHP3 and prenylated INPP5E. Targets NPHP3 to the ciliary membrane by releasing myristoylated NPHP3 from UNC119B cargo adapter into the cilium. Required for PKD1:PKD2 complex targeting from the trans-Golgi network to the cilium. This is ADP-ribosylation factor-like protein 3 (ARL3) from Pongo abelii (Sumatran orangutan).